Consider the following 217-residue polypeptide: MPPKGNKQAIADRRSQKQQKLQEQWDEEEESWDDSQAEEVSDEEEMESWESLDEELEDKPPKDEEEEIIASAAAPSSKEPARSQPPTGKVGPSPPRPGLLKASRRWDTVSIAGSPPAPVAPTKRSEKTTRPRKEKTSAIATRQDTPVAQELRKRIFPTLYAIFQQSRGQQLELKVKNRSLRSLTRSCLYHRREDQLQRTLEDAEALFNKYCSVSLKD.

The segment at 1–142 is disordered; the sequence is MPPKGNKQAI…KEKTSAIATR (142 aa). Residues 24–68 show a composition bias toward acidic residues; sequence QWDEEEESWDDSQAEEVSDEEEMESWESLDEELEDKPPKDEEEEI. Positions 69–78 are enriched in low complexity; sequence IASAAAPSSK. The segment covering 123–136 has biased composition (basic and acidic residues); that stretch reads KRSEKTTRPRKEKT. The tract at residues 160-187 is necessary for nuclear subcellular location; that stretch reads YAIFQQSRGQQLELKVKNRSLRSLTRSC. Positions 166–186 are RS-repeat; required for splicing enhancer activity; sequence SRGQQLELKVKNRSLRSLTRS.

Belongs to the adenoviridae splicing factor family. In terms of assembly, homooligomer. Interacts with DBP; this interaction occurs at a unique vertex during genome packaging. Interacts with IVa2; this interaction occurs at a unique vertex during genome packaging and seems to potentiate IVa2 and 33K oligomerization. In terms of processing, phosphorylated in vitro by human PKA and PRKDC. PRKDC inhibits, whereas PKA activates the splicing factor.

The protein localises to the host nucleus. Promotes alternative splicing of late transcripts by promoting splicing at weak 3' splice sites. Required for the temporal activation of major late pre-mRNA splicing at late times of infection. Induces the splicing and expression of the late capsid vertex protein. Its function is as follows. Probably functions as the small terminase that is part of the molecular motor that translocates genomic DNA in empty capsid during DNA packaging. This motor is located at a unique vertex and comprises at least the IVa2 ATPase, the small terminase 33K and probably a portal. Forms a ring-like structure of about 17 nm in which genomic DNA is translocated into the capsid. Stimulates IVa2 ATPase activity in the presence of the viral genome. Once the DNA is packaged, the terminase detaches: the 33K protein is present in the empty particles, but not in the mature virions. Also involved in virion assembly. This Human adenovirus F serotype 41 (HAdV-41) protein is Protein 33K.